The primary structure comprises 423 residues: Amino acid transporter AVT1J (423 aa).

The next 11 helical transmembrane spans lie at 39 to 59 (CFHG…YALA), 63 to 83 (WLSL…AILI), 110 to 130 (VIVS…FLIL), 151 to 171 (FQGK…SVWL), 186 to 206 (FASG…GVGF), 219 to 239 (VATS…FPTL), 252 to 272 (VMII…VLGY), 297 to 317 (AIWT…TPII), 333 to 355 (ASGF…LLPF), 359 to 381 (LMSL…LCYL), and 390 to 410 (LGFE…VVIT).

The protein belongs to the amino acid/polyamine transporter 2 family. Amino acid/auxin permease (AAAP) (TC 2.A.18.5) subfamily.

It is found in the membrane. The sequence is that of Amino acid transporter AVT1J from Arabidopsis thaliana (Mouse-ear cress).